An 85-amino-acid chain; its full sequence is Small ribosomal subunit protein uS17 (85 aa).

The protein belongs to the universal ribosomal protein uS17 family. As to quaternary structure, part of the 30S ribosomal subunit.

One of the primary rRNA binding proteins, it binds specifically to the 5'-end of 16S ribosomal RNA. This Desulforudis audaxviator (strain MP104C) protein is Small ribosomal subunit protein uS17.